The chain runs to 218 residues: Small ribosomal subunit protein uS3 (218 aa).

The 69-residue stretch at 38–106 (IRKYIESKLA…RVHINIVEIK (69 aa)) folds into the KH type-2 domain.

This sequence belongs to the universal ribosomal protein uS3 family. Part of the 30S ribosomal subunit. Forms a tight complex with proteins S10 and S14.

Functionally, binds the lower part of the 30S subunit head. Binds mRNA in the 70S ribosome, positioning it for translation. This Ligilactobacillus salivarius (strain UCC118) (Lactobacillus salivarius) protein is Small ribosomal subunit protein uS3.